A 208-amino-acid polypeptide reads, in one-letter code: ATP phosphoribosyltransferase (208 aa).

The protein belongs to the ATP phosphoribosyltransferase family. Short subfamily. As to quaternary structure, heteromultimer composed of HisG and HisZ subunits.

It localises to the cytoplasm. The enzyme catalyses 1-(5-phospho-beta-D-ribosyl)-ATP + diphosphate = 5-phospho-alpha-D-ribose 1-diphosphate + ATP. It functions in the pathway amino-acid biosynthesis; L-histidine biosynthesis; L-histidine from 5-phospho-alpha-D-ribose 1-diphosphate: step 1/9. Catalyzes the condensation of ATP and 5-phosphoribose 1-diphosphate to form N'-(5'-phosphoribosyl)-ATP (PR-ATP). Has a crucial role in the pathway because the rate of histidine biosynthesis seems to be controlled primarily by regulation of HisG enzymatic activity. This chain is ATP phosphoribosyltransferase, found in Clostridioides difficile (strain 630) (Peptoclostridium difficile).